A 106-amino-acid chain; its full sequence is Large ribosomal subunit protein eL42 (106 aa).

Belongs to the eukaryotic ribosomal protein eL42 family.

The polypeptide is Large ribosomal subunit protein eL42 (RPL44) (Yarrowia lipolytica (strain CLIB 122 / E 150) (Yeast)).